The primary structure comprises 54 residues: Sec-independent protein translocase protein TatA (54 aa).

A helical membrane pass occupies residues 1–21 (MGMSFSHLLIVLLIIFVLFGA).

This sequence belongs to the TatA/E family. In terms of assembly, the Tat system comprises two distinct complexes: a TatABC complex, containing multiple copies of TatA, TatB and TatC subunits, and a separate TatA complex, containing only TatA subunits. Substrates initially bind to the TatABC complex, which probably triggers association of the separate TatA complex to form the active translocon.

The protein resides in the cell inner membrane. In terms of biological role, part of the twin-arginine translocation (Tat) system that transports large folded proteins containing a characteristic twin-arginine motif in their signal peptide across membranes. TatA could form the protein-conducting channel of the Tat system. This Rickettsia prowazekii (strain Madrid E) protein is Sec-independent protein translocase protein TatA.